A 308-amino-acid polypeptide reads, in one-letter code: Spermidine synthase 1 (308 aa).

One can recognise a PABS domain in the interval 17–254; that stretch reads PGWFSEISPL…GVIGFMLCST (238 aa). Q48 is a binding site for S-adenosyl 3-(methylsulfanyl)propylamine. Y78 lines the putrescine pocket. Residues Q79, D103, E123, 154–155, and D173 contribute to the S-adenosyl 3-(methylsulfanyl)propylamine site; that span reads DG. The active-site Proton acceptor is D173. Residues 173-176 and Y242 contribute to the putrescine site; that span reads DSSD.

The protein belongs to the spermidine/spermine synthase family.

The catalysed reaction is S-adenosyl 3-(methylsulfanyl)propylamine + putrescine = S-methyl-5'-thioadenosine + spermidine + H(+). The protein operates within amine and polyamine biosynthesis; spermidine biosynthesis; spermidine from putrescine: step 1/1. The protein is Spermidine synthase 1 of Datura stramonium (Jimsonweed).